Here is a 781-residue protein sequence, read N- to C-terminus: AP-3 complex subunit beta (781 aa).

HEAT repeat units lie at residues 113 to 151 (PNLA…ASLY), 153 to 186 (IILH…EQGI), 187 to 224 (SIKD…QELQ), 294 to 332 (DHDL…PKTF), and 521 to 559 (PRIC…HDVD). 2 disordered regions span residues 694-713 (KPKR…TSSH) and 731-781 (ARQS…ETTE). Residues 699–712 (ASVSSVPSNTFTSS) are compositionally biased toward polar residues. Residues 746–758 (STSEETDHTDDES) are compositionally biased toward acidic residues. The segment covering 759-774 (GSSSGDESTESSYVSS) has biased composition (low complexity).

It belongs to the adaptor complexes large subunit family. Adaptor protein complex 3 (AP-3) is a heterotetramer composed of 2 large adaptins (APL5 and APL6), a medium adaptin (APM3) and a small adaptin (APS3).

It is found in the golgi apparatus. It localises to the cytoplasmic vesicle. The protein resides in the clathrin-coated vesicle membrane. Part of the AP-3 complex, an adaptor-related complex which is not clathrin-associated. The complex is associated with the Golgi region as well as more peripheral structures. It facilitates the budding of vesicles from the Golgi membrane and may be directly involved in trafficking to the vacuole. This is AP-3 complex subunit beta (APL6) from Eremothecium gossypii (strain ATCC 10895 / CBS 109.51 / FGSC 9923 / NRRL Y-1056) (Yeast).